The following is a 458-amino-acid chain: Zinc finger protein 239 (458 aa).

Residue lysine 108 forms a Glycyl lysine isopeptide (Lys-Gly) (interchain with G-Cter in SUMO2) linkage. Serine 191 bears the Phosphoserine mark. 9 consecutive C2H2-type zinc fingers follow at residues 207–229 (YECS…QRDH), 235–257 (YKCE…QAVH), 263–285 (YKCD…HAVH), 291–313 (YKCD…QRVH), 319–341 (YECE…QRVH), 347–369 (YKCG…RCIH), 375–397 (YQCY…LRVH), 403–425 (YHCG…QRVH), and 431–453 (YECS…QRVH).

This sequence belongs to the krueppel C2H2-type zinc-finger protein family.

The protein resides in the nucleus. Its function is as follows. May be involved in transcriptional regulation. The polypeptide is Zinc finger protein 239 (ZNF239) (Pongo abelii (Sumatran orangutan)).